Here is a 420-residue protein sequence, read N- to C-terminus: FLYWCH transcription factor 3 (420 aa).

Over residues 87 to 104 the composition is skewed to low complexity; the sequence is SSTSPDSQPSSSSSVMSS. Disordered regions lie at residues 87 to 107 and 119 to 138; these read SSTS…STDE and KINK…YTPR. A compositionally biased stretch (polar residues) spans 123-134; the sequence is AQRQSSPNSSKP. The FLYWCH-type zinc finger occupies 140 to 195; the sequence is IRERVLFDEHLYVFDKCSYDSKKRFFRCERKNTCPARIHTPFDAERVIHKVQVHNH.

Its function is as follows. Probable transcription factor. May bind to the promoters of target genes, including micro-RNA genes, in order to repress expression, and acting redundantly with flh-2. This is FLYWCH transcription factor 3 from Caenorhabditis elegans.